The sequence spans 191 residues: Thymidylate kinase (191 aa).

7–14 serves as a coordination point for ATP; sequence GVDGVGKS.

This sequence belongs to the thymidylate kinase family.

It carries out the reaction dTMP + ATP = dTDP + ADP. Functionally, phosphorylation of dTMP to form dTDP in both de novo and salvage pathways of dTTP synthesis. In Helicobacter pylori (strain HPAG1), this protein is Thymidylate kinase.